The chain runs to 172 residues: Adenine phosphoribosyltransferase (172 aa).

Belongs to the purine/pyrimidine phosphoribosyltransferase family. Homodimer.

Its subcellular location is the cytoplasm. It carries out the reaction AMP + diphosphate = 5-phospho-alpha-D-ribose 1-diphosphate + adenine. It participates in purine metabolism; AMP biosynthesis via salvage pathway; AMP from adenine: step 1/1. Functionally, catalyzes a salvage reaction resulting in the formation of AMP, that is energically less costly than de novo synthesis. This is Adenine phosphoribosyltransferase from Streptococcus pyogenes serotype M5 (strain Manfredo).